The primary structure comprises 332 residues: 5-dehydro-2-deoxygluconokinase 2 (332 aa).

The protein belongs to the carbohydrate kinase PfkB family.

The catalysed reaction is 5-dehydro-2-deoxy-D-gluconate + ATP = 6-phospho-5-dehydro-2-deoxy-D-gluconate + ADP + H(+). Its pathway is polyol metabolism; myo-inositol degradation into acetyl-CoA; acetyl-CoA from myo-inositol: step 5/7. Catalyzes the phosphorylation of 5-dehydro-2-deoxy-D-gluconate (2-deoxy-5-keto-D-gluconate or DKG) to 6-phospho-5-dehydro-2-deoxy-D-gluconate (DKGP). This chain is 5-dehydro-2-deoxygluconokinase 2, found in Bacillus cereus (strain ZK / E33L).